A 419-amino-acid chain; its full sequence is Akuammiline synthase 1 (419 aa).

His-151 functions as the Proton acceptor in the catalytic mechanism. A Nuclear localization signal motif is present at residues 206 to 213; sequence TRRFVFPA. The Proton acceptor role is filled by Asp-359.

Belongs to the plant acyltransferase family. Monomer.

The protein resides in the cytoplasm. Its subcellular location is the nucleus. The catalysed reaction is rhazimol + acetyl-CoA = akuammiline + CoA + H(+). The protein operates within alkaloid biosynthesis. Acyltransferase involved in the biosynthesis of akuammilan monoterpene indole alkaloids (MIAs) natural products, components with various biological properties such as antidiabetic, antibacterial, anti-inflammatory, anticancer, and antimalarial activities. Catalyzes the conversion of rhazimol to akuammiline. The sequence is that of Akuammiline synthase 1 from Alstonia scholaris (Dogbane).